Reading from the N-terminus, the 316-residue chain is Transaldolase A (316 aa).

Lys-131 (schiff-base intermediate with substrate) is an active-site residue.

This sequence belongs to the transaldolase family. Type 1 subfamily. In terms of assembly, homodimer.

It localises to the cytoplasm. It catalyses the reaction D-sedoheptulose 7-phosphate + D-glyceraldehyde 3-phosphate = D-erythrose 4-phosphate + beta-D-fructose 6-phosphate. The protein operates within carbohydrate degradation; pentose phosphate pathway; D-glyceraldehyde 3-phosphate and beta-D-fructose 6-phosphate from D-ribose 5-phosphate and D-xylulose 5-phosphate (non-oxidative stage): step 2/3. Its function is as follows. Transaldolase is important for the balance of metabolites in the pentose-phosphate pathway. This is Transaldolase A from Shigella flexneri.